The sequence spans 200 residues: MRIIGLTGGIGSGKSTVARIWQGCGAIVIDADAIARVLMEPGSTVLEEVSQVFGRDLLDAEGKLRRAELAARAFISEEKTAQLNSITHPAIRRQIRRGIECARAEGVQVLVLDHPLLFESGMSDLVDDVVVVDVPAELRVRRLVDLRGLKEEDARHRIMRQMSDEDRRMRADYVIDNSGSRDVLERLARELWQRFATQVE.

The region spanning 3-200 is the DPCK domain; that stretch reads IIGLTGGIGS…LWQRFATQVE (198 aa). 11-16 contributes to the ATP binding site; it reads GSGKST.

Belongs to the CoaE family.

The protein resides in the cytoplasm. It carries out the reaction 3'-dephospho-CoA + ATP = ADP + CoA + H(+). Its pathway is cofactor biosynthesis; coenzyme A biosynthesis; CoA from (R)-pantothenate: step 5/5. Catalyzes the phosphorylation of the 3'-hydroxyl group of dephosphocoenzyme A to form coenzyme A. This is Dephospho-CoA kinase from Corynebacterium diphtheriae (strain ATCC 700971 / NCTC 13129 / Biotype gravis).